The primary structure comprises 135 residues: Aspartate 1-decarboxylase (135 aa).

Ser25 (schiff-base intermediate with substrate; via pyruvic acid) is an active-site residue. At Ser25 the chain carries Pyruvic acid (Ser). A substrate-binding site is contributed by Thr57. The active-site Proton donor is Tyr58. Gly73–Ala75 provides a ligand contact to substrate.

The protein belongs to the PanD family. In terms of assembly, heterooctamer of four alpha and four beta subunits. It depends on pyruvate as a cofactor. Post-translationally, is synthesized initially as an inactive proenzyme, which is activated by self-cleavage at a specific serine bond to produce a beta-subunit with a hydroxyl group at its C-terminus and an alpha-subunit with a pyruvoyl group at its N-terminus.

It is found in the cytoplasm. The catalysed reaction is L-aspartate + H(+) = beta-alanine + CO2. It functions in the pathway cofactor biosynthesis; (R)-pantothenate biosynthesis; beta-alanine from L-aspartate: step 1/1. Functionally, catalyzes the pyruvoyl-dependent decarboxylation of aspartate to produce beta-alanine. The chain is Aspartate 1-decarboxylase from Albidiferax ferrireducens (strain ATCC BAA-621 / DSM 15236 / T118) (Rhodoferax ferrireducens).